The primary structure comprises 92 residues: Small ribosomal subunit protein uS19c (92 aa).

This sequence belongs to the universal ribosomal protein uS19 family.

The protein localises to the plastid. Its subcellular location is the chloroplast. In terms of biological role, protein S19 forms a complex with S13 that binds strongly to the 16S ribosomal RNA. The sequence is that of Small ribosomal subunit protein uS19c from Daucus carota (Wild carrot).